The primary structure comprises 415 residues: Cysteate synthase (415 aa).

The residue at position 104 (K104) is an N6-(pyridoxal phosphate)lysine. Pyridoxal 5'-phosphate is bound by residues N131 and T376.

The protein belongs to the threonine synthase family. Cysteate synthase subfamily. Homotrimer. Pyridoxal 5'-phosphate serves as cofactor.

It carries out the reaction O-phospho-L-serine + sulfite + H(+) = L-cysteate + phosphate. It functions in the pathway cofactor biosynthesis; coenzyme M biosynthesis. Functionally, specifically catalyzes the beta-elimination of phosphate from L-phosphoserine and the beta-addition of sulfite to the dehydroalanine intermediate to produce L-cysteate. This chain is Cysteate synthase, found in Methanothrix thermoacetophila (strain DSM 6194 / JCM 14653 / NBRC 101360 / PT) (Methanosaeta thermophila).